Reading from the N-terminus, the 352-residue chain is Phosphoribosylformylglycinamidine cyclo-ligase (352 aa).

The protein belongs to the AIR synthase family.

Its subcellular location is the cytoplasm. The enzyme catalyses 2-formamido-N(1)-(5-O-phospho-beta-D-ribosyl)acetamidine + ATP = 5-amino-1-(5-phospho-beta-D-ribosyl)imidazole + ADP + phosphate + H(+). It functions in the pathway purine metabolism; IMP biosynthesis via de novo pathway; 5-amino-1-(5-phospho-D-ribosyl)imidazole from N(2)-formyl-N(1)-(5-phospho-D-ribosyl)glycinamide: step 2/2. The protein is Phosphoribosylformylglycinamidine cyclo-ligase of Pseudomonas syringae pv. tomato (strain ATCC BAA-871 / DC3000).